Reading from the N-terminus, the 156-residue chain is MPRKGHIAKRDVLPDPLYNSKVVTKLINSIMLDGKRGVAQKICYDAFEIIGEKSGKDAMEVFETAMNNIMPLLEVKARRIGGATYQVPIEVRPERRQTLGIRWMLIAARKRGERSMRERLAGELLDASNNTGAAVKKREDTHKMAEANKAFAHYRY.

This sequence belongs to the universal ribosomal protein uS7 family. In terms of assembly, part of the 30S ribosomal subunit. Contacts proteins S9 and S11.

One of the primary rRNA binding proteins, it binds directly to 16S rRNA where it nucleates assembly of the head domain of the 30S subunit. Is located at the subunit interface close to the decoding center, probably blocks exit of the E-site tRNA. This Clostridium botulinum (strain Okra / Type B1) protein is Small ribosomal subunit protein uS7.